The sequence spans 325 residues: MATH domain and coiled-coil domain-containing protein At3g58340 (325 aa).

The MATH domain occupies 6 to 131 (DKKFCWEIKN…NGQVMIVAEV (126 aa)). Positions 266–315 (KVDWLEKKLDHVKEKKEKEQSGLIILQGIEQQLHELMHKCEKKKSEVLSV) form a coiled coil.

This Arabidopsis thaliana (Mouse-ear cress) protein is MATH domain and coiled-coil domain-containing protein At3g58340.